The following is a 181-amino-acid chain: MSIEALKTQLPAFAKDVKLNLSALPREDSLTEQQLYGLLVACGYTTRNGTVAQALEAEAAPHLSPAALDAAKAAASIMAMNNVYYRFTHLASNKAYETLPAKLRMSVIGNPGVDKVDFELWSLAVSAMNGCGRCIDAHEAVLREAGLSEAQIQTAVRVGAIIASAAVALEAAGAGFPEAAE.

The active-site Proton donor is Cys131. Cysteines 131 and 134 form a disulfide. The active-site Cysteine sulfenic acid (-SOH) intermediate is Cys134.

Belongs to the AhpD family.

The catalysed reaction is N(6)-[(R)-dihydrolipoyl]-L-lysyl-[lipoyl-carrier protein] + a hydroperoxide = N(6)-[(R)-lipoyl]-L-lysyl-[lipoyl-carrier protein] + an alcohol + H2O. In terms of biological role, antioxidant protein with alkyl hydroperoxidase activity. Required for the reduction of the AhpC active site cysteine residues and for the regeneration of the AhpC enzyme activity. The polypeptide is Alkyl hydroperoxide reductase AhpD (Azorhizobium caulinodans (strain ATCC 43989 / DSM 5975 / JCM 20966 / LMG 6465 / NBRC 14845 / NCIMB 13405 / ORS 571)).